Consider the following 118-residue polypeptide: Large ribosomal subunit protein uL18 (118 aa).

Belongs to the universal ribosomal protein uL18 family. As to quaternary structure, part of the 50S ribosomal subunit; part of the 5S rRNA/L5/L18/L25 subcomplex. Contacts the 5S and 23S rRNAs.

Functionally, this is one of the proteins that bind and probably mediate the attachment of the 5S RNA into the large ribosomal subunit, where it forms part of the central protuberance. The sequence is that of Large ribosomal subunit protein uL18 from Ralstonia pickettii (strain 12J).